Consider the following 184-residue polypeptide: Large ribosomal subunit protein uL5c (184 aa).

The protein belongs to the universal ribosomal protein uL5 family. Part of the 50S ribosomal subunit; contacts the 5S rRNA.

It localises to the plastid. The protein localises to the chloroplast. Binds 5S rRNA, forms part of the central protuberance of the 50S subunit. The protein is Large ribosomal subunit protein uL5c (rpl5) of Mesostigma viride (Green alga).